A 122-amino-acid chain; its full sequence is Probable F-box protein At4g23960 (122 aa).

An F-box domain is found at 1–45 (MIEQLFPEVTCYALRYLDYSSLCQLSMTSSSMRKTANDDVLWRAL).

In Arabidopsis thaliana (Mouse-ear cress), this protein is Probable F-box protein At4g23960.